Here is a 272-residue protein sequence, read N- to C-terminus: Orotidine 5'-phosphate decarboxylase (272 aa).

Lys-92 serves as the catalytic Proton donor.

This sequence belongs to the OMP decarboxylase family. Type 2 subfamily.

The catalysed reaction is orotidine 5'-phosphate + H(+) = UMP + CO2. It functions in the pathway pyrimidine metabolism; UMP biosynthesis via de novo pathway; UMP from orotate: step 2/2. This is Orotidine 5'-phosphate decarboxylase (pyrF) from Deinococcus radiodurans (strain ATCC 13939 / DSM 20539 / JCM 16871 / CCUG 27074 / LMG 4051 / NBRC 15346 / NCIMB 9279 / VKM B-1422 / R1).